A 195-amino-acid polypeptide reads, in one-letter code: Probable nicotinate-nucleotide adenylyltransferase (195 aa).

The protein belongs to the NadD family.

It carries out the reaction nicotinate beta-D-ribonucleotide + ATP + H(+) = deamido-NAD(+) + diphosphate. Its pathway is cofactor biosynthesis; NAD(+) biosynthesis; deamido-NAD(+) from nicotinate D-ribonucleotide: step 1/1. In terms of biological role, catalyzes the reversible adenylation of nicotinate mononucleotide (NaMN) to nicotinic acid adenine dinucleotide (NaAD). In Dictyoglomus thermophilum (strain ATCC 35947 / DSM 3960 / H-6-12), this protein is Probable nicotinate-nucleotide adenylyltransferase.